We begin with the raw amino-acid sequence, 370 residues long: Protein phosphatase 2C homolog 2 (370 aa).

Positions H23–F291 constitute a PPM-type phosphatase domain. The Mn(2+) site is built by D63, G64, D233, and D282. A phosphoserine mark is found at S355 and S357.

The protein belongs to the PP2C family. As to quaternary structure, monomer. It depends on Mg(2+) as a cofactor. The cofactor is Mn(2+).

The protein resides in the nucleus. Its subcellular location is the cytoplasm. It is found in the cytosol. The enzyme catalyses O-phospho-L-seryl-[protein] + H2O = L-seryl-[protein] + phosphate. It carries out the reaction O-phospho-L-threonyl-[protein] + H2O = L-threonyl-[protein] + phosphate. Activity is reduced when phosphosrylated at Ser-355/Ser-357. Dephosphorylating regulator for many key proteins. Has an important role in osmotic stability and cell shape control. It may negatively regulate the osmosensing signal transmitted through wis1 map kinase. The polypeptide is Protein phosphatase 2C homolog 2 (ptc2) (Schizosaccharomyces pombe (strain 972 / ATCC 24843) (Fission yeast)).